Reading from the N-terminus, the 124-residue chain is Small ribosomal subunit protein uS12 (124 aa).

Positions 9-28 (KSERTVQKNQTKSPALDSCP) are disordered. The residue at position 89 (Asp89) is a 3-methylthioaspartic acid.

It belongs to the universal ribosomal protein uS12 family. In terms of assembly, part of the 30S ribosomal subunit. Contacts proteins S8 and S17. May interact with IF1 in the 30S initiation complex.

In terms of biological role, with S4 and S5 plays an important role in translational accuracy. Interacts with and stabilizes bases of the 16S rRNA that are involved in tRNA selection in the A site and with the mRNA backbone. Located at the interface of the 30S and 50S subunits, it traverses the body of the 30S subunit contacting proteins on the other side and probably holding the rRNA structure together. The combined cluster of proteins S8, S12 and S17 appears to hold together the shoulder and platform of the 30S subunit. This is Small ribosomal subunit protein uS12 from Bdellovibrio bacteriovorus (strain ATCC 15356 / DSM 50701 / NCIMB 9529 / HD100).